The sequence spans 465 residues: UDP-N-acetylmuramate--L-alanine ligase (465 aa).

112–118 (GTHGKTT) is an ATP binding site.

It belongs to the MurCDEF family.

It is found in the cytoplasm. The enzyme catalyses UDP-N-acetyl-alpha-D-muramate + L-alanine + ATP = UDP-N-acetyl-alpha-D-muramoyl-L-alanine + ADP + phosphate + H(+). It participates in cell wall biogenesis; peptidoglycan biosynthesis. Its function is as follows. Cell wall formation. This Burkholderia cenocepacia (strain HI2424) protein is UDP-N-acetylmuramate--L-alanine ligase.